The primary structure comprises 759 residues: Protein transport protein sec23-1 (759 aa).

4 residues coordinate Zn(2+): cysteine 56, cysteine 60, cysteine 79, and cysteine 82.

This sequence belongs to the SEC23/SEC24 family. SEC23 subfamily. As to quaternary structure, the COPII coat is composed of at least 5 proteins: the sec23/24 complex, the sec13/31 complex, and the protein sar1.

Its subcellular location is the cytoplasm. The protein resides in the cytoplasmic vesicle. It localises to the COPII-coated vesicle membrane. It is found in the endoplasmic reticulum membrane. The protein localises to the golgi apparatus membrane. Component of the coat protein complex II (COPII) which promotes the formation of transport vesicles from the endoplasmic reticulum (ER). The coat has two main functions, the physical deformation of the endoplasmic reticulum membrane into vesicles and the selection of cargo molecules. This is Protein transport protein sec23-1 (sec231) from Schizosaccharomyces pombe (strain 972 / ATCC 24843) (Fission yeast).